Consider the following 132-residue polypeptide: MSTHDPISDLITRIRNAQMRSKSKVSTPGSKMRASVLEVLKSEGYIRGYASVEHASGHNELEIELKYFDGEPVIREIERVSKPGRRVYASVKNLPRVNNGLGISVLSTPKGIMADHAAREANVGGEVLFTVF.

The protein belongs to the universal ribosomal protein uS8 family. In terms of assembly, part of the 30S ribosomal subunit. Contacts proteins S5 and S12.

In terms of biological role, one of the primary rRNA binding proteins, it binds directly to 16S rRNA central domain where it helps coordinate assembly of the platform of the 30S subunit. The chain is Small ribosomal subunit protein uS8 from Afipia carboxidovorans (strain ATCC 49405 / DSM 1227 / KCTC 32145 / OM5) (Oligotropha carboxidovorans).